Consider the following 31-residue polypeptide: Kallikrein-1 (31 aa).

The 31-residue stretch at 1 to 31 (VIGGQECARDSHPWQAAVYHFSDIECGGVLV) folds into the Peptidase S1 domain.

It belongs to the peptidase S1 family. Kallikrein subfamily.

It carries out the reaction Preferential cleavage of Arg-|-Xaa bonds in small molecule substrates. Highly selective action to release kallidin (lysyl-bradykinin) from kininogen involves hydrolysis of Met-|-Xaa or Leu-|-Xaa.. Glandular kallikreins cleave Met-Lys and Arg-Ser bonds in kininogen to release Lys-bradykinin. The sequence is that of Kallikrein-1 from Cavia porcellus (Guinea pig).